Reading from the N-terminus, the 355-residue chain is Erythronate-4-phosphate dehydrogenase (355 aa).

The substrate site is built by serine 45 and threonine 66. NAD(+) is bound at residue aspartate 146. Arginine 206 is a catalytic residue. An NAD(+)-binding site is contributed by aspartate 229. Residue glutamate 234 is part of the active site. The active-site Proton donor is histidine 251. Glycine 254 is a binding site for NAD(+). Tyrosine 255 is a substrate binding site.

It belongs to the D-isomer specific 2-hydroxyacid dehydrogenase family. PdxB subfamily. In terms of assembly, homodimer.

The protein localises to the cytoplasm. The enzyme catalyses 4-phospho-D-erythronate + NAD(+) = (R)-3-hydroxy-2-oxo-4-phosphooxybutanoate + NADH + H(+). The protein operates within cofactor biosynthesis; pyridoxine 5'-phosphate biosynthesis; pyridoxine 5'-phosphate from D-erythrose 4-phosphate: step 2/5. In terms of biological role, catalyzes the oxidation of erythronate-4-phosphate to 3-hydroxy-2-oxo-4-phosphonooxybutanoate. The sequence is that of Erythronate-4-phosphate dehydrogenase from Acinetobacter baumannii (strain ACICU).